Reading from the N-terminus, the 573-residue chain is Dihydroxy-acid dehydratase (573 aa).

Cys-62 contributes to the [2Fe-2S] cluster binding site. Asp-94 serves as a coordination point for Mg(2+). Cys-135 is a [2Fe-2S] cluster binding site. Mg(2+) is bound by residues Asp-136 and Lys-137. Residue Lys-137 is modified to N6-carboxylysine. [2Fe-2S] cluster is bound at residue Cys-212. Residue Glu-463 participates in Mg(2+) binding. Residue Ser-489 is the Proton acceptor of the active site.

It belongs to the IlvD/Edd family. As to quaternary structure, homodimer. It depends on [2Fe-2S] cluster as a cofactor. The cofactor is Mg(2+).

It carries out the reaction (2R)-2,3-dihydroxy-3-methylbutanoate = 3-methyl-2-oxobutanoate + H2O. It catalyses the reaction (2R,3R)-2,3-dihydroxy-3-methylpentanoate = (S)-3-methyl-2-oxopentanoate + H2O. It participates in amino-acid biosynthesis; L-isoleucine biosynthesis; L-isoleucine from 2-oxobutanoate: step 3/4. Its pathway is amino-acid biosynthesis; L-valine biosynthesis; L-valine from pyruvate: step 3/4. In terms of biological role, functions in the biosynthesis of branched-chain amino acids. Catalyzes the dehydration of (2R,3R)-2,3-dihydroxy-3-methylpentanoate (2,3-dihydroxy-3-methylvalerate) into 2-oxo-3-methylpentanoate (2-oxo-3-methylvalerate) and of (2R)-2,3-dihydroxy-3-methylbutanoate (2,3-dihydroxyisovalerate) into 2-oxo-3-methylbutanoate (2-oxoisovalerate), the penultimate precursor to L-isoleucine and L-valine, respectively. In Arthrobacter sp. (strain FB24), this protein is Dihydroxy-acid dehydratase.